The primary structure comprises 579 residues: V-type ATP synthase alpha chain (579 aa).

Gly227–Thr234 contributes to the ATP binding site.

The protein belongs to the ATPase alpha/beta chains family.

The enzyme catalyses ATP + H2O + 4 H(+)(in) = ADP + phosphate + 5 H(+)(out). Produces ATP from ADP in the presence of a proton gradient across the membrane. The V-type alpha chain is a catalytic subunit. The sequence is that of V-type ATP synthase alpha chain from Anaeromyxobacter dehalogenans (strain 2CP-1 / ATCC BAA-258).